We begin with the raw amino-acid sequence, 239 residues long: MAALKSWLSRSVTSFFRYRQCLCVPVVANFKKRCFSELIRPWHKTVTIGFGVTLCAVPIAQKSEPHSLSSEALMRRAVSLVTDSTSTFLSQTTYALIEAITEYTKAVYTLTSLYRQYTSLLGKMNSEEEDEVWQVIIGARAEMTSKHQEYLKLETTWMTAVGLSEMAAEAAYQTGADQASITARNHIQLVKLQVEEVHQLSRKAETKLAEAQIEELRQKTQEEGEERAESEQEAYLRED.

Residues Met1–Cys21 constitute a mitochondrion transit peptide. The short motif at Ala56 to Ala60 is the IAP-binding element. Residues Arg217–Asp239 form a disordered region.

This sequence belongs to the Smac/DIABLO protein family. Homodimer. Interacts with BIRC2/c-IAP1 (via BIR3 domain). Interacts with BIRC6/BRUCE; inhibits BIRC6 activity. Interacts with BIRC7/livin. Interacts with XIAP/BIRC4 (via BIR3 domain). Interacts with the monomeric and dimeric form of BIRC5/survivin. Interacts with AREL1 (via HECT domain); in the cytoplasm following induction of apoptosis. Interacts with BEX3. Ubiquitinated by BIRC7/livin. Ubiquitinated by BIRC6. Post-translationally, the precursor form is proteolytically cleaved by mitochondrial processing peptidase MPP to remove the transit peptide and produce an intermediate form. This is then processed by PARL to produce the mature cleaved form which is released from mitochondria into the cytosol in apoptotic cells. Ubiquitously expressed with highest expression in testis. Expression is also high in heart, liver, kidney, spleen, prostate and ovary. Low in brain, lung, thymus and peripheral blood leukocytes. Isoform 3 is ubiquitously expressed.

Its subcellular location is the mitochondrion. It localises to the cytoplasm. It is found in the cytosol. Functionally, promotes apoptosis by activating caspases in the cytochrome c/Apaf-1/caspase-9 pathway. Acts by opposing the inhibitory activity of inhibitor of apoptosis proteins (IAP). Inhibits the activity of BIRC6/BRUCE by inhibiting its binding to caspases. In terms of biological role, attenuates the stability and apoptosis-inhibiting activity of XIAP/BIRC4 by promoting XIAP/BIRC4 ubiquitination and degradation through the ubiquitin-proteasome pathway. Also disrupts XIAP/BIRC4 interacting with processed caspase-9 and promotes caspase-3 activation. Its function is as follows. Defective in the capacity to down-regulate the XIAP/BIRC4 abundance. This is Diablo IAP-binding mitochondrial protein from Homo sapiens (Human).